Reading from the N-terminus, the 119-residue chain is Fluoride-specific ion channel FluC 2 (119 aa).

2 consecutive transmembrane segments (helical) span residues 1-21 (MIFA…ALTS) and 44-64 (GAFF…YAFL). The Na(+) site is built by glycine 70 and threonine 73. The chain crosses the membrane as a helical span at residues 98-118 (LLASYLGGAVLLTCGYYLGSL).

This sequence belongs to the fluoride channel Fluc/FEX (TC 1.A.43) family.

Its subcellular location is the cell membrane. It carries out the reaction fluoride(in) = fluoride(out). With respect to regulation, na(+) is not transported, but it plays an essential structural role and its presence is essential for fluoride channel function. Functionally, fluoride-specific ion channel. Important for reducing fluoride concentration in the cell, thus reducing its toxicity. This chain is Fluoride-specific ion channel FluC 2, found in Lactobacillus delbrueckii subsp. bulgaricus (strain ATCC 11842 / DSM 20081 / BCRC 10696 / JCM 1002 / NBRC 13953 / NCIMB 11778 / NCTC 12712 / WDCM 00102 / Lb 14).